The sequence spans 282 residues: Ermin (282 aa).

Polar residues-rich tracts occupy residues Met1 to Glu12 and Asn21 to Arg30. The disordered stretch occupies residues Met1 to Gly71. Phosphoserine is present on residues Ser72, Ser212, Ser224, Ser228, and Ser231. The span at Ser212–Ser224 shows a compositional bias: basic and acidic residues. A disordered region spans residues Ser212–Gly246. The span at Pro225 to Gly234 shows a compositional bias: polar residues. Thr235 carries the phosphothreonine modification. Residues Lys263–Leu282 are binds actin.

Binds actin. As to expression, expressed specifically by the oligodendrocytes. Highest expression seen in the spinal cord followed by brainstem, cerebellum, thalamus, and hypothalamus. In the myelin sheath, found mainly in the abaxon and the lateral few terminal loops. Its apposition to the myelinated axon, through the latter, defines an axonal subregion, termed juxtanode, at the Ranvier node-paranode junction.

The protein localises to the cytoplasm. Its subcellular location is the cytoskeleton. In terms of biological role, plays a role in cytoskeletal rearrangements during the late wrapping and/or compaction phases of myelinogenesis as well as in maintenance and stability of myelin sheath in the adult. May play an important role in late-stage oligodendroglia maturation, myelin/Ranvier node formation during CNS development, and in the maintenance and plasticity of related structures in the mature CNS. In Rattus norvegicus (Rat), this protein is Ermin (Ermn).